Reading from the N-terminus, the 267-residue chain is Ribosomal RNA small subunit methyltransferase A (267 aa).

L20, G45, E68, D91, and N113 together coordinate S-adenosyl-L-methionine.

The protein belongs to the class I-like SAM-binding methyltransferase superfamily. rRNA adenine N(6)-methyltransferase family. RsmA subfamily.

The protein localises to the cytoplasm. The enzyme catalyses adenosine(1518)/adenosine(1519) in 16S rRNA + 4 S-adenosyl-L-methionine = N(6)-dimethyladenosine(1518)/N(6)-dimethyladenosine(1519) in 16S rRNA + 4 S-adenosyl-L-homocysteine + 4 H(+). Specifically dimethylates two adjacent adenosines (A1518 and A1519) in the loop of a conserved hairpin near the 3'-end of 16S rRNA in the 30S particle. May play a critical role in biogenesis of 30S subunits. This is Ribosomal RNA small subunit methyltransferase A from Blochmanniella pennsylvanica (strain BPEN).